Here is a 450-residue protein sequence, read N- to C-terminus: tRNA modification GTPase MnmE (450 aa).

Residues Arg-23, Glu-80, and Arg-123 each coordinate (6S)-5-formyl-5,6,7,8-tetrahydrofolate. The 154-residue stretch at 219–372 folds into the TrmE-type G domain; the sequence is GLHVVLAGKP…LRQRLLQLAG (154 aa). Asn-229 is a binding site for K(+). GTP is bound by residues 229-234, 248-254, 273-276, and 353-355; these read NVGKSS, TPIAGTT, DTAG, and SAR. Ser-233 contacts Mg(2+). Residues Thr-248, Ile-250, and Thr-253 each contribute to the K(+) site. Thr-254 contributes to the Mg(2+) binding site. Lys-450 contacts (6S)-5-formyl-5,6,7,8-tetrahydrofolate.

Belongs to the TRAFAC class TrmE-Era-EngA-EngB-Septin-like GTPase superfamily. TrmE GTPase family. In terms of assembly, homodimer. Heterotetramer of two MnmE and two MnmG subunits. Requires K(+) as cofactor.

The protein resides in the cytoplasm. Exhibits a very high intrinsic GTPase hydrolysis rate. Involved in the addition of a carboxymethylaminomethyl (cmnm) group at the wobble position (U34) of certain tRNAs, forming tRNA-cmnm(5)s(2)U34. This is tRNA modification GTPase MnmE from Bordetella bronchiseptica (strain ATCC BAA-588 / NCTC 13252 / RB50) (Alcaligenes bronchisepticus).